Here is a 284-residue protein sequence, read N- to C-terminus: Tropomyosin beta chain (284 aa).

Met-1 bears the N-acetylmethionine mark. Residues 1–65 are disordered; that stretch reads MDAIKKKMQM…EVEKYSESVK (65 aa). A coiled-coil region spans residues 1 to 284; it reads MDAIKKKMQM…DNALNDITSL (284 aa). 2 stretches are compositionally biased toward basic and acidic residues: residues 12 to 40 and 51 to 65; these read KLDKENAIDRAEQAEADKKQAEDRCKQLE and KGTEDEVEKYSESVK. Position 53 is a phosphothreonine (Thr-53). A Phosphoserine; by PIK3CG modification is found at Ser-61. Thr-79 carries the post-translational modification Phosphothreonine. Ser-87 is modified (phosphoserine). The residue at position 108 (Thr-108) is a Phosphothreonine. Residues 117–136 are disordered; it reads EKAADESERGMKVIENRAMK. Phosphoserine occurs at positions 158, 206, and 215. Phosphothreonine is present on Thr-252. Phosphotyrosine is present on Tyr-261. Ser-271 carries the post-translational modification Phosphoserine. Residue Thr-282 is modified to Phosphothreonine. Ser-283 bears the Phosphoserine mark.

This sequence belongs to the tropomyosin family. As to quaternary structure, homodimer. Heterodimer of an alpha (TPM1, TPM3 or TPM4) and a beta (TPM2) chain. Phosphorylated on Ser-61 by PIK3CG. Phosphorylation on Ser-61 is required for ADRB2 internalization. Present in primary breast cancer tissue, absent from normal breast tissue.

It localises to the cytoplasm. The protein localises to the cytoskeleton. Binds to actin filaments in muscle and non-muscle cells. Plays a central role, in association with the troponin complex, in the calcium dependent regulation of vertebrate striated muscle contraction. Smooth muscle contraction is regulated by interaction with caldesmon. In non-muscle cells is implicated in stabilizing cytoskeleton actin filaments. The non-muscle isoform may have a role in agonist-mediated receptor internalization. This chain is Tropomyosin beta chain (TPM2), found in Homo sapiens (Human).